The primary structure comprises 238 residues: Ribonuclease PH (238 aa).

Residues Arg-86 and 124–126 each bind phosphate; that span reads GTR.

Belongs to the RNase PH family. Homohexameric ring arranged as a trimer of dimers.

It catalyses the reaction tRNA(n+1) + phosphate = tRNA(n) + a ribonucleoside 5'-diphosphate. Phosphorolytic 3'-5' exoribonuclease that plays an important role in tRNA 3'-end maturation. Removes nucleotide residues following the 3'-CCA terminus of tRNAs; can also add nucleotides to the ends of RNA molecules by using nucleoside diphosphates as substrates, but this may not be physiologically important. Probably plays a role in initiation of 16S rRNA degradation (leading to ribosome degradation) during starvation. The protein is Ribonuclease PH of Salmonella choleraesuis (strain SC-B67).